We begin with the raw amino-acid sequence, 246 residues long: 3-oxoacyl-[acyl-carrier-protein] reductase FabG (246 aa).

NADP(+)-binding positions include 11–14 (GASR), serine 36, 62–63 (DV), and asparagine 89. Serine 141 is a substrate binding site. Tyrosine 154 serves as the catalytic Proton acceptor. NADP(+)-binding positions include 154-158 (YVAAK) and isoleucine 187.

It belongs to the short-chain dehydrogenases/reductases (SDR) family. Homotetramer.

The enzyme catalyses a (3R)-hydroxyacyl-[ACP] + NADP(+) = a 3-oxoacyl-[ACP] + NADPH + H(+). Its pathway is lipid metabolism; fatty acid biosynthesis. In terms of biological role, catalyzes the NADPH-dependent reduction of beta-ketoacyl-ACP substrates to beta-hydroxyacyl-ACP products, the first reductive step in the elongation cycle of fatty acid biosynthesis. The chain is 3-oxoacyl-[acyl-carrier-protein] reductase FabG (fabG) from Bacillus subtilis (strain 168).